Reading from the N-terminus, the 1450-residue chain is Sister chromatid cohesion protein PDS5 homolog (1450 aa).

Disordered regions lie at residues 1–145 (MATR…KETK), 680–707 (VGGS…QQQQ), and 1340–1450 (LPPL…EVEN). Residues 45–59 (DDGELDSDIDEEDES) are compositionally biased toward acidic residues. Over residues 77–138 (KTQQQPQKSI…TSSSSQQSTQ (62 aa)) the composition is skewed to low complexity. Residues 650–716 (KQLFKKYLEE…QLQQPENDIE (67 aa)) adopt a coiled-coil conformation. Positions 682-691 (GSTTPTSKKS) are enriched in polar residues. Low complexity-rich tracts occupy residues 692–707 (QPPQ…QQQQ) and 1350–1363 (NNNN…STNN). Residues 1369–1378 (DENNNNKNDN) show a composition bias toward basic and acidic residues. Over residues 1387–1401 (NSTTAVPQKSIISKP) the composition is skewed to low complexity. A compositionally biased stretch (basic residues) spans 1402-1427 (PAKKVSKKAAAKQKSPKKKTNKKKKQ). The segment covering 1430-1450 (SEEEVSSSEEEDESQDEEVEN) has biased composition (acidic residues).

The protein belongs to the PDS5 family.

It localises to the nucleus. Functionally, may regulate sister chromatid cohesion during mitosis and couple it to DNA replication. This is Sister chromatid cohesion protein PDS5 homolog from Dictyostelium discoideum (Social amoeba).